Consider the following 348-residue polypeptide: Chemokine C-C motif receptor-like 2 (348 aa).

Residues 1 to 43 lie on the Extracellular side of the membrane; sequence MANYTPAPEDDYDVFIEDDLSDDEIEPCTPYDPKILSAQLVPY. A helical membrane pass occupies residues 44-64; the sequence is LYTTVFMVGLLDNILVVFILV. At 65–76 the chain is on the cytoplasmic side; it reads KYKGLRQAENMS. A helical transmembrane segment spans residues 77 to 97; the sequence is FLNLALSNLGFLLTLPFWAYA. At 98-110 the chain is on the extracellular side; that stretch reads ASHGEGFDDPLCK. The cysteines at positions 109 and 187 are disulfide-linked. The helical transmembrane segment at 111 to 131 threads the bilayer; the sequence is ILLLLYSIGLYSEAFFNVLLT. At 132 to 150 the chain is on the cytoplasmic side; it reads VQRYKEFFHVRRRFSACRT. Residues 151-171 traverse the membrane as a helical segment; that stretch reads VAGSIFISVLVWVTATLVTLP. The Extracellular segment spans residues 172–204; it reads ELVSYKPQMQSQKYKCFFTGLHFLPADETFWKH. The chain crosses the membrane as a helical span at residues 205–225; that stretch reads FLTLKMNILGFLLPLFAFVYC. At 226 to 244 the chain is on the cytoplasmic side; sequence YVRMRKTLQFRERNYGLFK. A helical transmembrane segment spans residues 245–265; it reads LVFTIMAVFLLMWGPYNIVLF. Over 266 to 292 the chain is Extracellular; the sequence is LSAFNEHFSLHGCGSSYNLNKSVQITR. Residue Asn-285 is glycosylated (N-linked (GlcNAc...) asparagine). A helical transmembrane segment spans residues 293 to 313; the sequence is IIAATHCCVNPLLYVFLDKAF. Residues 314–348 are Cytoplasmic-facing; the sequence is RKHLCHLFYLCSDTAPQPTEEPAQGASGEEYHLSS.

This sequence belongs to the G-protein coupled receptor 1 family.

It is found in the cell membrane. Functionally, receptor for CCL19 and chemerin/RARRES2. Does not appear to be a signaling receptor, but may have a role in modulating chemokine-triggered immune responses by capturing and internalizing CCL19 or by presenting RARRES2 ligand to CMKLR1, a functional signaling receptor. Plays a critical role for the development of Th2 responses. The protein is Chemokine C-C motif receptor-like 2 (CCRL2) of Bos taurus (Bovine).